Here is a 185-residue protein sequence, read N- to C-terminus: Ribosome-recycling factor (185 aa).

This sequence belongs to the RRF family.

It is found in the cytoplasm. In terms of biological role, responsible for the release of ribosomes from messenger RNA at the termination of protein biosynthesis. May increase the efficiency of translation by recycling ribosomes from one round of translation to another. The protein is Ribosome-recycling factor of Corynebacterium glutamicum (strain ATCC 13032 / DSM 20300 / JCM 1318 / BCRC 11384 / CCUG 27702 / LMG 3730 / NBRC 12168 / NCIMB 10025 / NRRL B-2784 / 534).